Here is a 471-residue protein sequence, read N- to C-terminus: Argininosuccinate lyase (471 aa).

The protein belongs to the lyase 1 family. Argininosuccinate lyase subfamily.

The protein resides in the cytoplasm. It carries out the reaction 2-(N(omega)-L-arginino)succinate = fumarate + L-arginine. It functions in the pathway amino-acid biosynthesis; L-arginine biosynthesis; L-arginine from L-ornithine and carbamoyl phosphate: step 3/3. This is Argininosuccinate lyase from Paramagnetospirillum magneticum (strain ATCC 700264 / AMB-1) (Magnetospirillum magneticum).